Reading from the N-terminus, the 803-residue chain is PR domain zinc finger protein 4 (803 aa).

One can recognise an SET domain in the interval 408–532; that stretch reads KQLVLRQSIV…PESELLFYYS (125 aa). 5 consecutive C2H2-type zinc fingers follow at residues 593-615, 621-643, 649-671, 677-699, and 705-727; these read WKCS…FMGH, HKCD…LKIH, YRCT…MVIH, LKCD…VLIH, and IKCP…LNSH. Residues 733-755 form a C2H2-type 6; degenerate zinc finger; sequence YVCEKCTKAYLTKYHLTRHLKTC. The disordered stretch occupies residues 757-803; that stretch reads EPSSSSSAQEEEDDESEEEDLADSMRTEDCRMGSAVYSTDESLSAHK. Residues 765-778 are compositionally biased toward acidic residues; it reads QEEEDDESEEEDLA. Positions 792–803 are enriched in polar residues; the sequence is VYSTDESLSAHK.

The protein belongs to the class V-like SAM-binding methyltransferase superfamily.

It localises to the nucleus. Functionally, may function as a transcription factor involved in cell differentiation. The protein is PR domain zinc finger protein 4 (Prdm4) of Mus musculus (Mouse).